Reading from the N-terminus, the 173-residue chain is MKLNEIRDNQGARKSRVRVGRGIGSGLGKTGGRGQKGQKSRSGVSINGFEGGQMPLHMRLPKRGFNNIFAKDYAEVNLGAIQKLVDAKKLDTAGVIDHAALKAAGVARGGKDGVRILGKGELTAKVSFKVAGVSAGAKAAIEKAGGSVEVIEVVPAAEKAAAKKGTAKAAKKA.

Basic and acidic residues predominate over residues 1–11 (MKLNEIRDNQG). Residues 1–50 (MKLNEIRDNQGARKSRVRVGRGIGSGLGKTGGRGQKGQKSRSGVSINGFE) form a disordered region. Residues 21 to 35 (RGIGSGLGKTGGRGQ) are compositionally biased toward gly residues.

Belongs to the universal ribosomal protein uL15 family. As to quaternary structure, part of the 50S ribosomal subunit.

Functionally, binds to the 23S rRNA. The chain is Large ribosomal subunit protein uL15 from Rhizorhabdus wittichii (strain DSM 6014 / CCUG 31198 / JCM 15750 / NBRC 105917 / EY 4224 / RW1) (Sphingomonas wittichii).